The chain runs to 266 residues: Elongation factor Ts (266 aa).

An involved in Mg(2+) ion dislocation from EF-Tu region spans residues 80–83 (TDFV).

The protein belongs to the EF-Ts family.

Its subcellular location is the cytoplasm. Associates with the EF-Tu.GDP complex and induces the exchange of GDP to GTP. It remains bound to the aminoacyl-tRNA.EF-Tu.GTP complex up to the GTP hydrolysis stage on the ribosome. In Buchnera aphidicola subsp. Baizongia pistaciae (strain Bp), this protein is Elongation factor Ts.